Reading from the N-terminus, the 559-residue chain is Podocan-like protein 1 (559 aa).

The N-terminal stretch at 1 to 20 is a signal peptide; it reads MRPQELLLLLLMLKWSLAHT. An N-linked (GlcNAc...) asparagine glycan is attached at N64. LRR repeat units lie at residues 66-89, 90-115, 117-139, 140-160, 161-186, 188-208, 209-231, 233-257, 258-281, 283-302, 303-328, 329-352, 354-373, 374-399, 400-423, 425-444, 445-470, 471-494, 496-515, and 517-541; these read TRAA…ELSR, LSGL…AFES, NQLE…LPRS, LRVA…TFGE, KPAL…TFHG, EVIT…PSLP, ASLE…ALSL, THLR…TFSK, LSSL…LPGT, TILH…RLHK, ARGL…TLRP, LRAL…LPRH, QALV…DLVS, ARAL…AFRR, LRAL…LPAS, RSLR…QLAG, LNKL…TWHE, LQAL…LPEA, EELY…AFLS, and PHLR…ALQG.

This sequence belongs to the small leucine-rich proteoglycan (SLRP) family. SLRP class V subfamily. Post-translationally, N-glycosylated. Detected in bone where it is expressed in osteoblasts and newly formed bone matrix (at protein level). Also expressed weakly in osteoclasts (at protein level). Expressed strongly in calvaria, lung and femur, and weakly in kidney.

The protein resides in the secreted. It is found in the extracellular space. The protein localises to the extracellular matrix. This chain is Podocan-like protein 1, found in Mus musculus (Mouse).